Reading from the N-terminus, the 251-residue chain is Small ribosomal subunit protein uS3 (251 aa).

Residues 39-111 form the KH type-2 domain; it reads IRELINNFSK…DVDLNILEVK (73 aa).

It belongs to the universal ribosomal protein uS3 family. As to quaternary structure, part of the 30S ribosomal subunit. Forms a tight complex with proteins S10 and S14.

In terms of biological role, binds the lower part of the 30S subunit head. Binds mRNA in the 70S ribosome, positioning it for translation. The protein is Small ribosomal subunit protein uS3 of Phytoplasma sp. (strain STRAWB1).